A 592-amino-acid chain; its full sequence is MWRTRWEDGAPTFTRNDEFLYCHTRYETFLRVMGDFQGIFECQYSADVLRDWVRNHVDQVLSLGIPHNWFLQVRPGSTMPELRDQLLDDVICCPERLIVLGKCVIMVEDHYEETELVLCMGGGTRLYIYEPSQEILLLCARHLDELARYGMMYTEAVYRQPQTPFATRVPHDVVAMLLRHGHDADALAACVGEHHGRDVNFHTPGRHAKTLKLLTSFGCLTDCWPFEVAPAARLAECEMYVTLQLRCRWYLLGAVGSYRAGGFFDTSFLIIFDRFCRFYVVIVKSHLDRSPPLQRLAGEIYRLADSLEELFRAGLMKVYVRRRYEHGLRRAARLERNGGCVHMGEAARLHFTMFDSGVDRDYARQFRWLCRGDRFRAEMLNNWDGWDAFTIWQARVVRGDFAERRRPRSLGDGEEEDEGNDGRAMPVVRRRPPPMPRDDDEDNHVVPDNQNLEVIHDALADDEEQGEDDDDSGAEPMEPEENNVVPNVERRGGEDAVAARMAAGHESDDDEWEDLGFDLEEDTVFDLKDVDEWFEQRRLAEKERWHLGQRIVNAYRTEAEVSEAEVEARRINLNTDLSPEWVKSFDFREHFV.

The segment at 407 to 491 is disordered; it reads PRSLGDGEEE…NNVVPNVERR (85 aa). The span at 460 to 481 shows a compositional bias: acidic residues; the sequence is ADDEEQGEDDDDSGAEPMEPEE.

The protein belongs to the herpesviridae US22 family.

The protein localises to the virion tegument. This is Tegument protein US23 (US23) from Homo sapiens (Human).